Here is a 328-residue protein sequence, read N- to C-terminus: 3-dehydroquinate synthase (328 aa).

This sequence belongs to the archaeal-type DHQ synthase family.

It carries out the reaction 2-amino-2,3,7-trideoxy-D-lyxo-hept-6-ulosonate + NAD(+) + H2O = 3-dehydroquinate + NH4(+) + NADH + H(+). Functionally, catalyzes the oxidative deamination and cyclization of 2-amino-3,7-dideoxy-D-threo-hept-6-ulosonic acid (ADH) to yield 3-dehydroquinate (DHQ), which is fed into the canonical shikimic pathway of aromatic amino acid biosynthesis. In Methanospirillum hungatei JF-1 (strain ATCC 27890 / DSM 864 / NBRC 100397 / JF-1), this protein is 3-dehydroquinate synthase.